The primary structure comprises 332 residues: Lipoyl synthase (332 aa).

[4Fe-4S] cluster-binding residues include Cys-74, Cys-79, Cys-85, Cys-100, Cys-104, Cys-107, and Ser-314. Residues 85-303 (CFGKGTATFM…EEKAYEMGFS (219 aa)) form the Radical SAM core domain.

Belongs to the radical SAM superfamily. Lipoyl synthase family. [4Fe-4S] cluster is required as a cofactor.

The protein localises to the cytoplasm. The enzyme catalyses [[Fe-S] cluster scaffold protein carrying a second [4Fe-4S](2+) cluster] + N(6)-octanoyl-L-lysyl-[protein] + 2 oxidized [2Fe-2S]-[ferredoxin] + 2 S-adenosyl-L-methionine + 4 H(+) = [[Fe-S] cluster scaffold protein] + N(6)-[(R)-dihydrolipoyl]-L-lysyl-[protein] + 4 Fe(3+) + 2 hydrogen sulfide + 2 5'-deoxyadenosine + 2 L-methionine + 2 reduced [2Fe-2S]-[ferredoxin]. Its pathway is protein modification; protein lipoylation via endogenous pathway; protein N(6)-(lipoyl)lysine from octanoyl-[acyl-carrier-protein]: step 2/2. In terms of biological role, catalyzes the radical-mediated insertion of two sulfur atoms into the C-6 and C-8 positions of the octanoyl moiety bound to the lipoyl domains of lipoate-dependent enzymes, thereby converting the octanoylated domains into lipoylated derivatives. The polypeptide is Lipoyl synthase (Polaromonas naphthalenivorans (strain CJ2)).